The following is a 293-amino-acid chain: Elongation factor Ts (293 aa).

The segment at 79-82 (TDFV) is involved in Mg(2+) ion dislocation from EF-Tu.

The protein belongs to the EF-Ts family.

The protein resides in the cytoplasm. In terms of biological role, associates with the EF-Tu.GDP complex and induces the exchange of GDP to GTP. It remains bound to the aminoacyl-tRNA.EF-Tu.GTP complex up to the GTP hydrolysis stage on the ribosome. In Macrococcus caseolyticus (strain JCSC5402) (Macrococcoides caseolyticum), this protein is Elongation factor Ts.